The primary structure comprises 328 residues: 4-hydroxythreonine-4-phosphate dehydrogenase (328 aa).

Positions 135 and 136 each coordinate substrate. 3 residues coordinate a divalent metal cation: His165, His210, and His265. 3 residues coordinate substrate: Lys273, Asn282, and Arg291.

It belongs to the PdxA family. Homodimer. The cofactor is Zn(2+). It depends on Mg(2+) as a cofactor. Co(2+) serves as cofactor.

It localises to the cytoplasm. It catalyses the reaction 4-(phosphooxy)-L-threonine + NAD(+) = 3-amino-2-oxopropyl phosphate + CO2 + NADH. The protein operates within cofactor biosynthesis; pyridoxine 5'-phosphate biosynthesis; pyridoxine 5'-phosphate from D-erythrose 4-phosphate: step 4/5. Its function is as follows. Catalyzes the NAD(P)-dependent oxidation of 4-(phosphooxy)-L-threonine (HTP) into 2-amino-3-oxo-4-(phosphooxy)butyric acid which spontaneously decarboxylates to form 3-amino-2-oxopropyl phosphate (AHAP). This is 4-hydroxythreonine-4-phosphate dehydrogenase from Pseudomonas aeruginosa (strain ATCC 15692 / DSM 22644 / CIP 104116 / JCM 14847 / LMG 12228 / 1C / PRS 101 / PAO1).